The chain runs to 545 residues: Esterase-5C (545 aa).

The first 19 residues, 1–19 (MLAARLIILLSFYWLSASA), serve as a signal peptide directing secretion. A disulfide bridge connects residues cysteine 84 and cysteine 103. An N-linked (GlcNAc...) asparagine glycan is attached at asparagine 113. The active-site Acyl-ester intermediate is the serine 207. Cysteine 259 and cysteine 271 are disulfide-bonded. N-linked (GlcNAc...) asparagine glycosylation occurs at asparagine 421. Catalysis depends on histidine 467, which acts as the Charge relay system. N-linked (GlcNAc...) asparagine glycosylation is present at asparagine 507. The cysteines at positions 515 and 536 are disulfide-linked.

Belongs to the type-B carboxylesterase/lipase family.

It localises to the secreted. It catalyses the reaction a carboxylic ester + H2O = an alcohol + a carboxylate + H(+). This chain is Esterase-5C (Est-5C), found in Drosophila pseudoobscura pseudoobscura (Fruit fly).